Reading from the N-terminus, the 250-residue chain is Putative ankyrin repeat protein RBE_0623 (250 aa).

ANK repeat units follow at residues 70–99, 104–134, and 137–166; these read IGDS…EPNT, NCYT…NINE, and GKET…PDKF.

In Rickettsia bellii (strain RML369-C), this protein is Putative ankyrin repeat protein RBE_0623.